Consider the following 217-residue polypeptide: Putative 8-oxo-dGTP diphosphatase 3 (217 aa).

The Nudix hydrolase domain maps to Gly30–Leu164. The interval Leu67–Leu92 is disordered. 4 residues coordinate Mg(2+): Gly70, Glu85, Glu88, and Glu89. Residues Gly70–Gly91 carry the Nudix box motif.

It belongs to the Nudix hydrolase family. Requires Mg(2+) as cofactor. Mn(2+) serves as cofactor.

The enzyme catalyses 8-oxo-dGTP + H2O = 8-oxo-dGMP + diphosphate + H(+). Its function is as follows. May be involved in the GO system responsible for removing an oxidatively damaged form of guanine (7,8-dihydro-8-oxoguanine, 8-oxo-dGTP) from DNA and the nucleotide pool. 8-oxo-dGTP is inserted opposite dA and dC residues of template DNA with almost equal efficiency thus leading to A.T to G.C transversions. MutT specifically degrades 8-oxo-dGTP to the monophosphate. The polypeptide is Putative 8-oxo-dGTP diphosphatase 3 (mutT3) (Mycobacterium tuberculosis (strain CDC 1551 / Oshkosh)).